Reading from the N-terminus, the 859-residue chain is Protein O-mannosyl-transferase Tmtc1 (859 aa).

Residues 1–22 are Cytoplasmic-facing; it reads MHTPKCRRPSMSATLSHKDLAG. Residues 23–43 form a helical membrane-spanning segment; it reads LAGCSALAFVLYLNTLNAGFV. Over 44–103 the chain is Extracellular; it reads YDDRRAILANGDVTGARPLANLLRNDFWGTPLVDSGSHGSWRPLCVLSFRLNYLAGGMTP. The chain crosses the membrane as a helical span at residues 104 to 124; sequence LGYHLVNVMLHCVATWLVFLV. Topologically, residues 125 to 134 are cytoplasmic; it reads ARTLLPSRMG. The next 2 helical transmembrane spans lie at 135 to 154 and 155 to 174; these read VLAA…AVAG and LVGR…YLSY. Over 175–189 the chain is Cytoplasmic; that stretch reads RRHMLNREWGSLILT. Residues 190–210 form a helical membrane-spanning segment; that stretch reads IMLALAALLCKETAITALLLC. Residues 211-245 are Extracellular-facing; the sequence is GLCDVLSPVGRENSDKVCDGSISGLASFNFQRRFR. A helical membrane pass occupies residues 246–266; the sequence is SLSILGFTLLCGLYCRLSLLP. At 267–288 the chain is on the cytoplasmic side; sequence RPSTAFSAADNPTAHESCFWTR. The chain crosses the membrane as a helical span at residues 289–309; sequence TLTFLYLPVANFGILLWPQEL. At 310–328 the chain is on the extracellular side; sequence SFDWGMEAVSRIRTLWDAR. The helical transmembrane segment at 329–349 threads the bilayer; it reads NILTAGFYGSLVAILWKGSGL. The Cytoplasmic segment spans residues 350 to 422; that stretch reads RSAASPMDFA…SWTAAPILGT (73 aa). The helical transmembrane segment at 423-443 threads the bilayer; the sequence is AFLVLPFLPASNLLFYVGFVM. The Extracellular portion of the chain corresponds to 444–446; the sequence is AER. The chain crosses the membrane as a helical span at residues 447–467; sequence VLYLPSVGYCLLFGLGFGHLW. The Cytoplasmic segment spans residues 468 to 473; it reads QRVNSS. Residues 474-493 form a helical membrane-spanning segment; it reads WRSRLMLLCGLALLLGVHGV. Topologically, residues 494 to 859 are extracellular; it reads RTFRRNLDWR…RMNVHKHENE (366 aa). TPR repeat units follow at residues 518–551, 552–585, 586–620, 632–665, 671–704, 705–739, 740–773, 774–807, and 808–841; these read PKAL…RPTM, ADAH…RPQL, AVAY…EGSG, YTCY…LPLL, AVLH…QPEQ, GAAY…APLE, PSSH…APQD, YTLQ…QPMA, and AHAH…QPGH. Asparagine 567 is a glycosylation site (N-linked (GlcNAc...) asparagine). The N-linked (GlcNAc...) asparagine glycan is linked to asparagine 718.

It belongs to the TMTC family.

It localises to the membrane. It is found in the endoplasmic reticulum. It carries out the reaction a di-trans,poly-cis-dolichyl beta-D-mannosyl phosphate + L-seryl-[protein] = 3-O-(alpha-D-mannosyl)-L-seryl-[protein] + a di-trans,poly-cis-dolichyl phosphate + H(+). It catalyses the reaction a di-trans,poly-cis-dolichyl beta-D-mannosyl phosphate + L-threonyl-[protein] = 3-O-(alpha-D-mannosyl)-L-threonyl-[protein] + a di-trans,poly-cis-dolichyl phosphate + H(+). The protein operates within protein modification; protein glycosylation. Functionally, transfers mannosyl residues to the hydroxyl group of serine or threonine residues. The chain is Protein O-mannosyl-transferase Tmtc1 from Drosophila melanogaster (Fruit fly).